The chain runs to 253 residues: Ribonuclease HII (253 aa).

An RNase H type-2 domain is found at 32–223; it reads APVAGLDEAG…FKTSGEEDRI (192 aa). A divalent metal cation contacts are provided by aspartate 38, glutamate 39, and aspartate 130.

It belongs to the RNase HII family. Mn(2+) is required as a cofactor. Mg(2+) serves as cofactor.

It localises to the cytoplasm. It catalyses the reaction Endonucleolytic cleavage to 5'-phosphomonoester.. Endonuclease that specifically degrades the RNA of RNA-DNA hybrids. The polypeptide is Ribonuclease HII (Chelativorans sp. (strain BNC1)).